A 737-amino-acid polypeptide reads, in one-letter code: Pentatricopeptide repeat-containing protein At3g49740 (737 aa).

PPR repeat units lie at residues 20–55 (TLLN…TLRP), 56–90 (DQYS…GLLC), 91–121 (HSHV…IDEP), 122–152 (DVYS…MPER), 154–188 (DVAI…GVRH), 189–222 (DKFG…GFFI), 223–253 (ASSV…TDVA), 256–289 (DQVT…SLRP), 290–321 (TDLT…GYEK), 322–352 (YTLV…LEEK), 353–387 (DLVT…GVKP), 388–418 (DEFT…FGLS), 420–454 (KIEI…NLIS), 455–485 (WNAI…EVRI), 488–522 (DAYT…GQFK), 523–553 (ETLI…MSEK), 554–588 (DVVS…GKVI), 590–620 (DAAT…MVEF), and 626–656 (NVDH…SEKT). The interval 663-737 (VWWALFSACA…KQRGCSWMRL (75 aa)) is type E motif; degenerate.

This sequence belongs to the PPR family. PCMP-E subfamily.

The protein is Pentatricopeptide repeat-containing protein At3g49740 (PCMP-E84) of Arabidopsis thaliana (Mouse-ear cress).